Reading from the N-terminus, the 596-residue chain is Phosphoenolpyruvate carboxykinase [GTP] (596 aa).

Substrate contacts are provided by residues arginine 77 and 205 to 207 (YGG). Mn(2+) is bound by residues lysine 214 and histidine 234. Serine 256 serves as a coordination point for substrate. Residue 257–262 (ACGKTN) coordinates GTP. Residue cysteine 258 is part of the active site. Aspartate 283 lines the Mn(2+) pocket. Residues 362–388 (KKGSTEKAAHPNSRFTAPAKNNPAISP) form a disordered region. Position 373–375 (373–375 (NSR)) interacts with substrate. Residues arginine 375, arginine 406, and 499-502 (YGDN) each bind GTP.

Belongs to the phosphoenolpyruvate carboxykinase [GTP] family. In terms of assembly, monomer. Requires Mn(2+) as cofactor.

It is found in the cytoplasm. The catalysed reaction is oxaloacetate + GTP = phosphoenolpyruvate + GDP + CO2. It functions in the pathway carbohydrate biosynthesis; gluconeogenesis. Functionally, catalyzes the conversion of oxaloacetate (OAA) to phosphoenolpyruvate (PEP), the rate-limiting step in the metabolic pathway that produces glucose from lactate and other precursors derived from the citric acid cycle. The sequence is that of Phosphoenolpyruvate carboxykinase [GTP] from Anaeromyxobacter dehalogenans (strain 2CP-C).